Consider the following 397-residue polypeptide: Acetate kinase (397 aa).

Position 8 (N8) interacts with Mg(2+). ATP is bound at residue K15. R89 is a substrate binding site. D146 acts as the Proton donor/acceptor in catalysis. ATP is bound by residues 206–210 (HLGNG), 281–283 (DLR), and 329–333 (GVGEN). E382 contributes to the Mg(2+) binding site.

Belongs to the acetokinase family. As to quaternary structure, homodimer. Requires Mg(2+) as cofactor. Mn(2+) is required as a cofactor.

The protein resides in the cytoplasm. It catalyses the reaction acetate + ATP = acetyl phosphate + ADP. The protein operates within metabolic intermediate biosynthesis; acetyl-CoA biosynthesis; acetyl-CoA from acetate: step 1/2. Functionally, catalyzes the formation of acetyl phosphate from acetate and ATP. Can also catalyze the reverse reaction. In Bacillus anthracis, this protein is Acetate kinase.